We begin with the raw amino-acid sequence, 157 residues long: 2-C-methyl-D-erythritol 2,4-cyclodiphosphate synthase (157 aa).

A divalent metal cation is bound by residues Asp-9 and His-11. 4-CDP-2-C-methyl-D-erythritol 2-phosphate contacts are provided by residues 9-11 (DVH) and 35-36 (HS). Residue His-43 coordinates a divalent metal cation. 4-CDP-2-C-methyl-D-erythritol 2-phosphate-binding positions include 57–59 (DIG), 62–66 (FPDTD), 101–107 (AEKPKMA), 133–136 (TTTE), Phe-140, and Arg-143.

The protein belongs to the IspF family. In terms of assembly, homotrimer. A divalent metal cation serves as cofactor.

It carries out the reaction 4-CDP-2-C-methyl-D-erythritol 2-phosphate = 2-C-methyl-D-erythritol 2,4-cyclic diphosphate + CMP. Its pathway is isoprenoid biosynthesis; isopentenyl diphosphate biosynthesis via DXP pathway; isopentenyl diphosphate from 1-deoxy-D-xylulose 5-phosphate: step 4/6. Its function is as follows. Involved in the biosynthesis of isopentenyl diphosphate (IPP) and dimethylallyl diphosphate (DMAPP), two major building blocks of isoprenoid compounds. Catalyzes the conversion of 4-diphosphocytidyl-2-C-methyl-D-erythritol 2-phosphate (CDP-ME2P) to 2-C-methyl-D-erythritol 2,4-cyclodiphosphate (ME-CPP) with a corresponding release of cytidine 5-monophosphate (CMP). The chain is 2-C-methyl-D-erythritol 2,4-cyclodiphosphate synthase from Listeria monocytogenes serotype 4b (strain CLIP80459).